Reading from the N-terminus, the 907-residue chain is CRM-domain containing factor CFM3B, chloroplastic (907 aa).

The transit peptide at 1 to 59 directs the protein to the chloroplast; that stretch reads MAINSSHHFCPMTTTTTTSAKFVDSLGSSFCKFHGTSSSISLRSYRFGFSFMKNVKRLS. Disordered stretches follow at residues 62 to 89 and 101 to 123; these read GSSSSSSSRNENWNRTQKQNQFRPSKVV and LGVISGENSSRSGDVGGGSGSSS. Residues 70 to 84 show a composition bias toward polar residues; sequence RNENWNRTQKQNQFR. 2 consecutive CRM domains span residues 220 to 316 and 421 to 518; these read MTLS…DGSG and STLG…EVGE. Positions 621–654 form a coiled coil; sequence SAKLVRKLERKLAFAEKKLLKAERALAKVEESLK. Positions 663–763 constitute a CRM 3 domain; that stretch reads EGITEEERFM…KDYKRPTTLR (101 aa). Residues 824 to 907 form a disordered region; the sequence is MAYSSDEETE…LQNEELDVQP (84 aa). 2 stretches are compositionally biased toward acidic residues: residues 828 to 857 and 868 to 881; these read SDEETEETDGEEDDVYLDTYEDEGEDDEEG and TDVEFGSDESDTDF. Residues 882 to 897 are compositionally biased toward polar residues; it reads GDNSASSTTPETTFVE.

As to quaternary structure, interacts with RNA. Part of large ribonucleo-protein particles that contain CAF1 and/or CAF2, and RNC1. Interacts with RFC3 in plastids. In terms of tissue distribution, expressed at low levels in roots and shoots.

It is found in the plastid. The protein resides in the chloroplast. Binds specific group II introns in chloroplasts and facilitates their splicing. Exhibits non-specific action during plastid rRNA biogenesis; RFC3 prevents unaccurate splicing to improve the accuracy of plastid rRNA processing. Acts on subgroup IIB introns. The substrates of the subgroup IIB also require the CRM domain proteins CAF1 or CAF2, with a simultaneous binding of CFM3B and CAF1 or CAF2. Required for seed development. This chain is CRM-domain containing factor CFM3B, chloroplastic, found in Arabidopsis thaliana (Mouse-ear cress).